Here is a 403-residue protein sequence, read N- to C-terminus: NADH-quinone oxidoreductase subunit D (403 aa).

The protein belongs to the complex I 49 kDa subunit family. In terms of assembly, NDH-1 is composed of 14 different subunits. Subunits NuoB, C, D, E, F, and G constitute the peripheral sector of the complex.

Its subcellular location is the cell inner membrane. It carries out the reaction a quinone + NADH + 5 H(+)(in) = a quinol + NAD(+) + 4 H(+)(out). In terms of biological role, NDH-1 shuttles electrons from NADH, via FMN and iron-sulfur (Fe-S) centers, to quinones in the respiratory chain. The immediate electron acceptor for the enzyme in this species is believed to be ubiquinone. Couples the redox reaction to proton translocation (for every two electrons transferred, four hydrogen ions are translocated across the cytoplasmic membrane), and thus conserves the redox energy in a proton gradient. This Ruegeria sp. (strain TM1040) (Silicibacter sp.) protein is NADH-quinone oxidoreductase subunit D.